A 133-amino-acid chain; its full sequence is Small ribosomal subunit protein uS8 (133 aa).

Belongs to the universal ribosomal protein uS8 family. In terms of assembly, part of the 30S ribosomal subunit. Contacts proteins S5 and S12.

Functionally, one of the primary rRNA binding proteins, it binds directly to 16S rRNA central domain where it helps coordinate assembly of the platform of the 30S subunit. In Deinococcus deserti (strain DSM 17065 / CIP 109153 / LMG 22923 / VCD115), this protein is Small ribosomal subunit protein uS8.